We begin with the raw amino-acid sequence, 228 residues long: Leucyl/phenylalanyl-tRNA--protein transferase (228 aa).

It belongs to the L/F-transferase family.

It is found in the cytoplasm. The catalysed reaction is N-terminal L-lysyl-[protein] + L-leucyl-tRNA(Leu) = N-terminal L-leucyl-L-lysyl-[protein] + tRNA(Leu) + H(+). The enzyme catalyses N-terminal L-arginyl-[protein] + L-leucyl-tRNA(Leu) = N-terminal L-leucyl-L-arginyl-[protein] + tRNA(Leu) + H(+). It carries out the reaction L-phenylalanyl-tRNA(Phe) + an N-terminal L-alpha-aminoacyl-[protein] = an N-terminal L-phenylalanyl-L-alpha-aminoacyl-[protein] + tRNA(Phe). Functions in the N-end rule pathway of protein degradation where it conjugates Leu, Phe and, less efficiently, Met from aminoacyl-tRNAs to the N-termini of proteins containing an N-terminal arginine or lysine. The sequence is that of Leucyl/phenylalanyl-tRNA--protein transferase from Lawsonia intracellularis (strain PHE/MN1-00).